A 376-amino-acid chain; its full sequence is Putative phosphoserine aminotransferase (376 aa).

The segment at M1 to R30 is disordered. R50 contacts L-glutamate. Pyridoxal 5'-phosphate contacts are provided by residues A84 to T85, F108, T154, D176, and Q199. K200 carries the N6-(pyridoxal phosphate)lysine modification. Pyridoxal 5'-phosphate is bound at residue N251–T252.

This sequence belongs to the class-V pyridoxal-phosphate-dependent aminotransferase family. SerC subfamily. As to quaternary structure, homodimer. Pyridoxal 5'-phosphate is required as a cofactor.

It is found in the cytoplasm. The catalysed reaction is O-phospho-L-serine + 2-oxoglutarate = 3-phosphooxypyruvate + L-glutamate. It carries out the reaction 4-(phosphooxy)-L-threonine + 2-oxoglutarate = (R)-3-hydroxy-2-oxo-4-phosphooxybutanoate + L-glutamate. It participates in amino-acid biosynthesis; L-serine biosynthesis; L-serine from 3-phospho-D-glycerate: step 2/3. The protein operates within cofactor biosynthesis; pyridoxine 5'-phosphate biosynthesis; pyridoxine 5'-phosphate from D-erythrose 4-phosphate: step 3/5. Its function is as follows. Catalyzes the reversible conversion of 3-phosphohydroxypyruvate to phosphoserine and of 3-hydroxy-2-oxo-4-phosphonooxybutanoate to phosphohydroxythreonine. The polypeptide is Putative phosphoserine aminotransferase (Mycobacterium leprae (strain TN)).